The primary structure comprises 429 residues: Hemoglobinase (429 aa).

The signal sequence occupies residues Met-1–Cys-19. A propeptide spanning residues Gln-20–Thr-31 is cleaved from the precursor. His-151 is an active-site residue. The interval Phe-288–Ser-309 is disordered. Residues Arg-292–Gly-429 constitute a propeptide that is removed on maturation.

This sequence belongs to the peptidase C13 family.

The enzyme catalyses Hydrolysis of proteins and small molecule substrates at -Asn-|-Xaa- bonds.. In terms of biological role, this protease is used by the parasite for degradation of the host globin. The chain is Hemoglobinase from Schistosoma mansoni (Blood fluke).